We begin with the raw amino-acid sequence, 269 residues long: Zinc transporter ZupT (269 aa).

The next 8 membrane-spanning stretches (helical) occupy residues 12–32 (AFSI…LVMF), 41–61 (LSFG…TEIF), 75–95 (DHAF…IALI), 126–146 (MMAA…TFFA), 152–172 (AVGM…GISI), 187–207 (VWAC…GYLV), 211–231 (FLSP…MVFL), and 249–269 (TVYG…LFHF). Residues N136 and E139 each contribute to the Fe(2+) site. Zn(2+) contacts are provided by E139 and H164. The Fe(2+) site is built by N165, E168, and E197. E168 contacts Zn(2+).

Belongs to the ZIP transporter (TC 2.A.5) family. ZupT subfamily.

The protein localises to the cell inner membrane. The catalysed reaction is Zn(2+)(in) = Zn(2+)(out). In terms of biological role, mediates zinc uptake. May also transport other divalent cations. The protein is Zinc transporter ZupT of Neisseria meningitidis serogroup B (strain ATCC BAA-335 / MC58).